A 403-amino-acid chain; its full sequence is Probable tRNA sulfurtransferase (403 aa).

One can recognise a THUMP domain in the interval 60–165; it reads KLAEERLKPI…KEGVFLSCRT (106 aa). ATP-binding positions include 183–184, 208–209, Arg-265, Gly-287, and Gln-296; these read ML and HF.

Belongs to the ThiI family.

It localises to the cytoplasm. It catalyses the reaction [ThiI sulfur-carrier protein]-S-sulfanyl-L-cysteine + a uridine in tRNA + 2 reduced [2Fe-2S]-[ferredoxin] + ATP + H(+) = [ThiI sulfur-carrier protein]-L-cysteine + a 4-thiouridine in tRNA + 2 oxidized [2Fe-2S]-[ferredoxin] + AMP + diphosphate. The catalysed reaction is [ThiS sulfur-carrier protein]-C-terminal Gly-Gly-AMP + S-sulfanyl-L-cysteinyl-[cysteine desulfurase] + AH2 = [ThiS sulfur-carrier protein]-C-terminal-Gly-aminoethanethioate + L-cysteinyl-[cysteine desulfurase] + A + AMP + 2 H(+). The protein operates within cofactor biosynthesis; thiamine diphosphate biosynthesis. Catalyzes the ATP-dependent transfer of a sulfur to tRNA to produce 4-thiouridine in position 8 of tRNAs, which functions as a near-UV photosensor. Also catalyzes the transfer of sulfur to the sulfur carrier protein ThiS, forming ThiS-thiocarboxylate. This is a step in the synthesis of thiazole, in the thiamine biosynthesis pathway. The sulfur is donated as persulfide by IscS. The polypeptide is Probable tRNA sulfurtransferase (Listeria welshimeri serovar 6b (strain ATCC 35897 / DSM 20650 / CCUG 15529 / CIP 8149 / NCTC 11857 / SLCC 5334 / V8)).